A 365-amino-acid polypeptide reads, in one-letter code: Protein RecA (365 aa).

Position 73–80 (73–80 (GPESSGKT)) interacts with ATP.

This sequence belongs to the RecA family.

It is found in the cytoplasm. Its function is as follows. Can catalyze the hydrolysis of ATP in the presence of single-stranded DNA, the ATP-dependent uptake of single-stranded DNA by duplex DNA, and the ATP-dependent hybridization of homologous single-stranded DNAs. It interacts with LexA causing its activation and leading to its autocatalytic cleavage. This Prochlorococcus marinus (strain AS9601) protein is Protein RecA.